A 332-amino-acid chain; its full sequence is Fructose-1,6-bisphosphatase class 1 (332 aa).

Glu-89, Asp-110, Leu-112, and Asp-113 together coordinate Mg(2+). Substrate contacts are provided by residues 113 to 116, Asn-206, Tyr-239, 257 to 259, and Lys-269; these read DGSS and YLY. Glu-275 provides a ligand contact to Mg(2+).

This sequence belongs to the FBPase class 1 family. As to quaternary structure, homotetramer. The cofactor is Mg(2+).

Its subcellular location is the cytoplasm. It carries out the reaction beta-D-fructose 1,6-bisphosphate + H2O = beta-D-fructose 6-phosphate + phosphate. It functions in the pathway carbohydrate biosynthesis; gluconeogenesis. The protein is Fructose-1,6-bisphosphatase class 1 of Citrobacter koseri (strain ATCC BAA-895 / CDC 4225-83 / SGSC4696).